The following is a 327-amino-acid chain: Zinc transport protein ZntB (327 aa).

Residues 1-271 (MESFAGKELQ…AMNRRTYTMS (271 aa)) lie on the Cytoplasmic side of the membrane. The chain crosses the membrane as a helical span at residues 272–292 (LLAMVFLPTTFLTGLFGVNLG). The Periplasmic portion of the chain corresponds to 293 to 300 (GIPGGDAP). Residues 301–321 (FGFFTFCLMLVILVGGVAWWL) form a helical membrane-spanning segment. Residues 322 to 327 (KRSKWL) are Cytoplasmic-facing.

This sequence belongs to the CorA metal ion transporter (MIT) (TC 1.A.35) family.

It localises to the cell inner membrane. The catalysed reaction is Zn(2+)(out) + H(+)(out) = Zn(2+)(in) + H(+)(in). Functionally, zinc transporter. Acts as a Zn(2+):proton symporter, which likely mediates zinc ion uptake. This chain is Zinc transport protein ZntB, found in Pectobacterium atrosepticum (strain SCRI 1043 / ATCC BAA-672) (Erwinia carotovora subsp. atroseptica).